A 429-amino-acid chain; its full sequence is GTPase Obg (429 aa).

Positions 1–158 constitute an Obg domain; it reads MFADSAKIFI…LNVTLELKVI (158 aa). The 175-residue stretch at 159–333 folds into the OBG-type G domain; the sequence is ADVGLVGFPN…LLYYVSDLLK (175 aa). Residues 165-172, 190-194, 212-215, 282-285, and 314-316 contribute to the GTP site; these read GFPNVGKS, FTTLN, DIPG, NKTD, and SAV. The Mg(2+) site is built by Ser-172 and Thr-192. One can recognise an OCT domain in the interval 350 to 429; it reads ENLVMSEPYT…MYGLEFDYYK (80 aa).

It belongs to the TRAFAC class OBG-HflX-like GTPase superfamily. OBG GTPase family. As to quaternary structure, monomer. Mg(2+) serves as cofactor.

Its subcellular location is the cytoplasm. In terms of biological role, an essential GTPase which binds GTP, GDP and possibly (p)ppGpp with moderate affinity, with high nucleotide exchange rates and a fairly low GTP hydrolysis rate. Plays a role in control of the cell cycle, stress response, ribosome biogenesis and in those bacteria that undergo differentiation, in morphogenesis control. In Lachnoclostridium phytofermentans (strain ATCC 700394 / DSM 18823 / ISDg) (Clostridium phytofermentans), this protein is GTPase Obg.